A 144-amino-acid polypeptide reads, in one-letter code: 3-dehydroquinate dehydratase (144 aa).

The active-site Proton acceptor is tyrosine 22. Asparagine 71, histidine 77, and aspartate 84 together coordinate substrate. Residue histidine 97 is the Proton donor of the active site. Substrate-binding positions include 98-99 and arginine 108; that span reads IS.

The protein belongs to the type-II 3-dehydroquinase family. In terms of assembly, homododecamer.

The catalysed reaction is 3-dehydroquinate = 3-dehydroshikimate + H2O. It functions in the pathway metabolic intermediate biosynthesis; chorismate biosynthesis; chorismate from D-erythrose 4-phosphate and phosphoenolpyruvate: step 3/7. Functionally, catalyzes a trans-dehydration via an enolate intermediate. This is 3-dehydroquinate dehydratase (aroQ) from Thermotoga maritima (strain ATCC 43589 / DSM 3109 / JCM 10099 / NBRC 100826 / MSB8).